A 407-amino-acid polypeptide reads, in one-letter code: Tyrosine--tRNA ligase (407 aa).

Residues 47-56 (PTAPDLHLGA) carry the 'HIGH' region motif. The short motif at 231–235 (KMSKS) is the 'KMSKS' region element. K234 serves as a coordination point for ATP. One can recognise an S4 RNA-binding domain in the interval 342 to 403 (PRLSQLLVQV…GKRHFARVAL (62 aa)).

It belongs to the class-I aminoacyl-tRNA synthetase family. TyrS type 2 subfamily. In terms of assembly, homodimer.

The protein resides in the cytoplasm. It carries out the reaction tRNA(Tyr) + L-tyrosine + ATP = L-tyrosyl-tRNA(Tyr) + AMP + diphosphate + H(+). In terms of biological role, catalyzes the attachment of tyrosine to tRNA(Tyr) in a two-step reaction: tyrosine is first activated by ATP to form Tyr-AMP and then transferred to the acceptor end of tRNA(Tyr). This is Tyrosine--tRNA ligase from Acidithiobacillus ferrooxidans (Thiobacillus ferrooxidans).